The sequence spans 676 residues: Probable metal-nicotianamine transporter YSL6 (676 aa).

13 helical membrane-spanning segments follow: residues 38 to 58, 62 to 82, 110 to 130, 154 to 174, 276 to 296, 321 to 341, 392 to 412, 413 to 433, 452 to 472, 510 to 530, 561 to 581, 604 to 624, and 639 to 659; these read ITIRGLTVSALLGTLFCIITH, LTVGIIPSLNVAAGLLGFFFV, CVVACYGLAFSGGFGSYLIAM, GLWWMIGFLFVVSFLGLFSLV, IVNCSVLLGAIISWGILWPFV, VFIAIAIILGDGLYNLVKIIA, FAIAGYVGLAAISTATIPIIF, PPLKWYFVLCSYFIAPALAFC, IGLFIIASVVGSDGGVIAGLA, VGTAMGCVIAPLTFWLFWTAF, LPKHCLALCYGFFIAALIVNL, FYIGAYFAIDMFVGTVILFVW, and VASGLICGDGIWTIPSAILSI.

The protein belongs to the YSL (TC 2.A.67.2) family.

It localises to the membrane. May be involved in the transport of nicotianamine-chelated metals. This chain is Probable metal-nicotianamine transporter YSL6 (YSL6), found in Arabidopsis thaliana (Mouse-ear cress).